The chain runs to 599 residues: Aspartate--tRNA(Asp/Asn) ligase (599 aa).

An L-aspartate-binding site is contributed by E174. Residues Q198–K201 are aspartate. R220 is a binding site for L-aspartate. Residues R220–E222 and Q229 each bind ATP. Position 457 (H457) interacts with L-aspartate. Residue E491 coordinates ATP. R498 is a binding site for L-aspartate. G543–R546 lines the ATP pocket.

It belongs to the class-II aminoacyl-tRNA synthetase family. Type 1 subfamily. Homodimer.

The protein resides in the cytoplasm. It catalyses the reaction tRNA(Asx) + L-aspartate + ATP = L-aspartyl-tRNA(Asx) + AMP + diphosphate. In terms of biological role, aspartyl-tRNA synthetase with relaxed tRNA specificity since it is able to aspartylate not only its cognate tRNA(Asp) but also tRNA(Asn). Reaction proceeds in two steps: L-aspartate is first activated by ATP to form Asp-AMP and then transferred to the acceptor end of tRNA(Asp/Asn). This chain is Aspartate--tRNA(Asp/Asn) ligase, found in Paraburkholderia phymatum (strain DSM 17167 / CIP 108236 / LMG 21445 / STM815) (Burkholderia phymatum).